A 517-amino-acid chain; its full sequence is Cytochrome P450 CYP72A616 (517 aa).

Residues V5 to A25 form a helical membrane-spanning segment. Position 465 (C465) interacts with heme.

Belongs to the cytochrome P450 family. In terms of tissue distribution, mainly expressed in leaves and, at low levels, in roots, fruits and stems.

It is found in the membrane. It functions in the pathway steroid metabolism; cholesterol metabolism. Functionally, involved in the biosynthesis of spiroketal steroid and saponin natural products from cholesterol such as diosgenin and analogs (e.g. furostanol and spirostanol), plant defense compounds used as main precursors for the industrial production of steroid hormones. During the 5,6-spiroketalization of cholesterol, may catalyze the 27-monohydroxylation of furostanol-type steroid to an intermediate product that undergoes a stereospecific formation of the terminal heterocycle to yield diosgenin. The polypeptide is Cytochrome P450 CYP72A616 (Paris polyphylla (Daiswa polyphylla)).